Consider the following 714-residue polypeptide: Polyribonucleotide nucleotidyltransferase (714 aa).

Mg(2+) is bound by residues D487 and D493. Residues 554-613 form the KH domain; sequence PRIEVLQIPTDKIRDVIGTGGKVIREIVEKTGAKINIEDDGTVKVASANGESIRAAIKWI. The S1 motif domain occupies 623 to 691; the sequence is GQIYDGTVVK…DRGKVRLSMK (69 aa).

This sequence belongs to the polyribonucleotide nucleotidyltransferase family. The cofactor is Mg(2+).

Its subcellular location is the cytoplasm. The enzyme catalyses RNA(n+1) + phosphate = RNA(n) + a ribonucleoside 5'-diphosphate. Its function is as follows. Involved in mRNA degradation. Catalyzes the phosphorolysis of single-stranded polyribonucleotides processively in the 3'- to 5'-direction. This is Polyribonucleotide nucleotidyltransferase from Afipia carboxidovorans (strain ATCC 49405 / DSM 1227 / KCTC 32145 / OM5) (Oligotropha carboxidovorans).